The primary structure comprises 425 residues: Trigger factor (425 aa).

The PPIase FKBP-type domain occupies 163–248 (GDTAVIDFEG…VHEIKTKELP (86 aa)).

The protein belongs to the FKBP-type PPIase family. Tig subfamily.

It is found in the cytoplasm. The catalysed reaction is [protein]-peptidylproline (omega=180) = [protein]-peptidylproline (omega=0). Involved in protein export. Acts as a chaperone by maintaining the newly synthesized protein in an open conformation. Functions as a peptidyl-prolyl cis-trans isomerase. The sequence is that of Trigger factor from Bacillus anthracis (strain A0248).